Consider the following 711-residue polypeptide: Triacylglycerol hydrolase DDHD2 (711 aa).

Residues 1–24 (MSSVQSQQEQLSQSDPSPSPNSCS) form a disordered region. One can recognise a WWE domain in the interval 30-112 (DMDAGSLYEP…WDELASEVRR (83 aa)). Ser351 serves as the catalytic Nucleophile. The SAM domain occupies 385 to 448 (GDTPTLEEDL…NYFSTRKNSM (64 aa)). Ser447 is modified (phosphoserine). 2 disordered regions span residues 449–470 (GIKR…SEFC) and 609–638 (LQAS…EETS). The 206-residue stretch at 495-700 (LIYKPEIFFA…VLLVLKEIYQ (206 aa)) folds into the DDHD domain. The span at 614 to 624 (TPEETEAEPES) shows a compositional bias: acidic residues.

The protein belongs to the PA-PLA1 family. Forms homooligomers and, to a much smaller extent, heterooligomers with DDHD1. Widely expressed (at protein level).

It is found in the cytoplasm. The protein localises to the cytosol. Its subcellular location is the endoplasmic reticulum-Golgi intermediate compartment. The protein resides in the golgi apparatus. It localises to the cis-Golgi network. The enzyme catalyses a triacylglycerol + H2O = a diacylglycerol + a fatty acid + H(+). The catalysed reaction is a diacylglycerol + H2O = a monoacylglycerol + a fatty acid + H(+). It carries out the reaction a 1,3-diacylglycerol + H2O = a 1-acylglycerol + a fatty acid + H(+). It catalyses the reaction a 1-acylglycerol + H2O = glycerol + a fatty acid + H(+). The enzyme catalyses 1,2,3-tri-(9Z-octadecenoyl)-glycerol + H2O = di-(9Z)-octadecenoylglycerol + (9Z)-octadecenoate + H(+). The catalysed reaction is di-(9Z)-octadecenoylglycerol + H2O = (9Z-octadecenoyl)-glycerol + (9Z)-octadecenoate + H(+). It carries out the reaction 1,3-di-(9Z-octadecenoyl)-glycerol + H2O = 1-(9Z-octadecenoyl)-glycerol + (9Z)-octadecenoate + H(+). It catalyses the reaction trihexadecanoylglycerol + H2O = dihexadecanoylglycerol + hexadecanoate + H(+). The enzyme catalyses 1,2-di-(9Z-octadecenoyl)-sn-glycero-3-phosphocholine + H2O = (9Z-octadecenoyl)-sn-glycero-3-phosphocholine + (9Z)-octadecenoate + H(+). The catalysed reaction is 1-(9Z-octadecenoyl)-glycerol + H2O = glycerol + (9Z)-octadecenoate + H(+). It carries out the reaction 1,2-di-(9Z-octadecenoyl)-sn-glycero-3-phosphate + H2O = 2-(9Z-octadecenoyl)-sn-glycero-3-phosphate + (9Z)-octadecenoate + H(+). It catalyses the reaction 1-hexadecanoyl-2-(9Z-octadecenoyl)-sn-glycero-3-phosphate + H2O = 2-(9Z-octadecenoyl)-sn-glycero-3-phosphate + hexadecanoate + H(+). The enzyme catalyses 1-hexadecanoyl-2-(9Z-octadecenoyl)-sn-glycero-3-phosphoethanolamine + H2O = 2-(9Z-octadecenoyl)-sn-glycero-3-phosphoethanolamine + hexadecanoate + H(+). The catalysed reaction is 1-hexadecanoyl-2-(9Z-octadecenoyl)-sn-glycero-3-phospho-L-serine + H2O = 2-(9Z-octadecenoyl)-sn-glycero-3-phospho-L-serine + hexadecanoate + H(+). It carries out the reaction 1-hexadecanoyl-2-(9Z-octadecenoyl)-sn-glycero-3-phosphocholine + H2O = 2-(9Z-octadecenoyl)-sn-glycero-3-phosphocholine + hexadecanoate + H(+). Functionally, diacylglycerol (DAG) and triacylglycerol (TAG) lipase required for proper lipid homeostasis in the central nervous system. It cooperates with PNPLA2/ATGL in neuronal TAG catabolism and hydrolyzes sn-1,3 DAG downstream of PNPLA2/ATGL. In vitro, it also acts as a phospholipase that hydrolyzes preferentially phosphatidic acids, including 1,2-dioleoyl-sn-phosphatidic acid, phosphatidylcholine and phosphatidylethanolamine. Specifically binds to phosphatidylinositol 3-phosphate (PI(3)P), phosphatidylinositol 4-phosphate (PI(4)P), phosphatidylinositol 5-phosphate (PI(5)P) and possibly phosphatidylinositol 4,5-bisphosphate (PI(4,5)P2). May be involved in the maintenance of the endoplasmic reticulum and/or Golgi structures. May regulate the transport between Golgi apparatus and plasma membrane. The protein is Triacylglycerol hydrolase DDHD2 of Homo sapiens (Human).